The chain runs to 578 residues: Probable arginine--tRNA ligase, mitochondrial (578 aa).

The transit peptide at Met1–Val16 directs the protein to the mitochondrion. Residues Ser133–Asn135, His144, Tyr322, Asp326, and Gln350 contribute to the L-arginine site. A 'HIGH' region motif is present at residues Ser133–His144. Lys568 bears the N6-acetyllysine mark.

It belongs to the class-I aminoacyl-tRNA synthetase family.

Its subcellular location is the mitochondrion membrane. The catalysed reaction is tRNA(Arg) + L-arginine + ATP = L-arginyl-tRNA(Arg) + AMP + diphosphate. Its function is as follows. Catalyzes the attachment of arginine to tRNA(Arg) in a two-step reaction: arginine is first activated by ATP to form Arg-AMP and then transferred to the acceptor end of tRNA(Arg). The polypeptide is Probable arginine--tRNA ligase, mitochondrial (Rars2) (Mus musculus (Mouse)).